A 187-amino-acid chain; its full sequence is Structural protein ORF187 (187 aa).

A helical transmembrane segment spans residues 65–85; that stretch reads IYQPTAIAVSGVGGIIGALLA.

It localises to the host membrane. The protein localises to the virion. This is Structural protein ORF187 from Acidianus two-tailed virus (ATV).